Here is a 44-residue protein sequence, read N- to C-terminus: Small ribosomal subunit protein eS31 (44 aa).

Zn(2+) is bound by residues C18, C21, C35, and C38. The C4-type zinc-finger motif lies at 18 to 38 (CPRCGDTFLAAHDDRQVCGRC).

This sequence belongs to the eukaryotic ribosomal protein eS31 family. As to quaternary structure, part of the 30S ribosomal subunit. It depends on Zn(2+) as a cofactor.

This chain is Small ribosomal subunit protein eS31, found in Halobacterium salinarum (strain ATCC 29341 / DSM 671 / R1).